The primary structure comprises 354 residues: Methylthioribose-1-phosphate isomerase (354 aa).

Substrate contacts are provided by residues 58–60, R101, and Q204; that span reads RGA. The Proton donor role is filled by D245. Residue 255 to 256 coordinates substrate; that stretch reads NK.

Belongs to the eIF-2B alpha/beta/delta subunits family. MtnA subfamily.

The enzyme catalyses 5-(methylsulfanyl)-alpha-D-ribose 1-phosphate = 5-(methylsulfanyl)-D-ribulose 1-phosphate. Its pathway is amino-acid biosynthesis; L-methionine biosynthesis via salvage pathway; L-methionine from S-methyl-5-thio-alpha-D-ribose 1-phosphate: step 1/6. In terms of biological role, catalyzes the interconversion of methylthioribose-1-phosphate (MTR-1-P) into methylthioribulose-1-phosphate (MTRu-1-P). This chain is Methylthioribose-1-phosphate isomerase, found in Xylella fastidiosa (strain 9a5c).